A 306-amino-acid chain; its full sequence is UDP-3-O-acyl-N-acetylglucosamine deacetylase (306 aa).

Histidine 79, histidine 238, and aspartate 242 together coordinate Zn(2+). Histidine 265 (proton donor) is an active-site residue.

Belongs to the LpxC family. Requires Zn(2+) as cofactor.

The enzyme catalyses a UDP-3-O-[(3R)-3-hydroxyacyl]-N-acetyl-alpha-D-glucosamine + H2O = a UDP-3-O-[(3R)-3-hydroxyacyl]-alpha-D-glucosamine + acetate. Its pathway is glycolipid biosynthesis; lipid IV(A) biosynthesis; lipid IV(A) from (3R)-3-hydroxytetradecanoyl-[acyl-carrier-protein] and UDP-N-acetyl-alpha-D-glucosamine: step 2/6. Catalyzes the hydrolysis of UDP-3-O-myristoyl-N-acetylglucosamine to form UDP-3-O-myristoylglucosamine and acetate, the committed step in lipid A biosynthesis. The protein is UDP-3-O-acyl-N-acetylglucosamine deacetylase of Shewanella oneidensis (strain ATCC 700550 / JCM 31522 / CIP 106686 / LMG 19005 / NCIMB 14063 / MR-1).